Reading from the N-terminus, the 387-residue chain is Galactokinase (387 aa).

A substrate-binding site is contributed by 33–36 (EHID). ATP-binding positions include Ser-67 and 124-130 (GAGLSSS). Mg(2+) contacts are provided by Ser-130 and Glu-162. Asp-174 functions as the Proton acceptor in the catalytic mechanism. Tyr-224 lines the substrate pocket.

This sequence belongs to the GHMP kinase family. GalK subfamily.

It is found in the cytoplasm. The enzyme catalyses alpha-D-galactose + ATP = alpha-D-galactose 1-phosphate + ADP + H(+). It participates in carbohydrate metabolism; galactose metabolism. In terms of biological role, catalyzes the transfer of the gamma-phosphate of ATP to D-galactose to form alpha-D-galactose-1-phosphate (Gal-1-P). The sequence is that of Galactokinase from Clostridium perfringens (strain 13 / Type A).